The chain runs to 372 residues: Phospho-N-acetylmuramoyl-pentapeptide-transferase (372 aa).

Transmembrane regions (helical) follow at residues 2 to 22, 71 to 91, 98 to 118, 134 to 154, 176 to 196, 211 to 231, 251 to 271, 275 to 295, 300 to 320, and 349 to 369; these read LVWL…VSSL, TPTM…LLWA, VWIL…DDWL, YFWL…IATL, MIPF…YFVI, GLAI…AYVS, VIIV…FNAH, VFMG…IAVM, IAFA…MLQV, and QVVA…LMTL.

Belongs to the glycosyltransferase 4 family. MraY subfamily. Requires Mg(2+) as cofactor.

It is found in the cell inner membrane. It carries out the reaction UDP-N-acetyl-alpha-D-muramoyl-L-alanyl-gamma-D-glutamyl-meso-2,6-diaminopimeloyl-D-alanyl-D-alanine + di-trans,octa-cis-undecaprenyl phosphate = di-trans,octa-cis-undecaprenyl diphospho-N-acetyl-alpha-D-muramoyl-L-alanyl-D-glutamyl-meso-2,6-diaminopimeloyl-D-alanyl-D-alanine + UMP. Its pathway is cell wall biogenesis; peptidoglycan biosynthesis. Catalyzes the initial step of the lipid cycle reactions in the biosynthesis of the cell wall peptidoglycan: transfers peptidoglycan precursor phospho-MurNAc-pentapeptide from UDP-MurNAc-pentapeptide onto the lipid carrier undecaprenyl phosphate, yielding undecaprenyl-pyrophosphoryl-MurNAc-pentapeptide, known as lipid I. This is Phospho-N-acetylmuramoyl-pentapeptide-transferase from Psychrobacter cryohalolentis (strain ATCC BAA-1226 / DSM 17306 / VKM B-2378 / K5).